The primary structure comprises 119 residues: EF-hand calcium-binding domain-containing protein 2 (119 aa).

The first 22 residues, 1 to 22 (MKVAVVLIVVLVVMMIGQETDS), serve as a signal peptide directing secretion. An EF-hand domain is found at 82-117 (VDDNGFVEFKATYDVDGDGVVQVEEYETVVELTENL). 4 residues coordinate Ca(2+): D95, D97, D99, and E106.

In terms of tissue distribution, component of the acid-soluble organic matrix of calcified layers of the shell (at protein level).

It is found in the secreted. This chain is EF-hand calcium-binding domain-containing protein 2, found in Lottia gigantea (Giant owl limpet).